Consider the following 421-residue polypeptide: D-amino acid dehydrogenase (421 aa).

Residue 3–17 participates in FAD binding; it reads VLVLGGGVVGVTSAY.

The protein belongs to the DadA oxidoreductase family. FAD serves as cofactor.

The catalysed reaction is a D-alpha-amino acid + A + H2O = a 2-oxocarboxylate + AH2 + NH4(+). It functions in the pathway amino-acid degradation; D-alanine degradation; NH(3) and pyruvate from D-alanine: step 1/1. In terms of biological role, oxidative deamination of D-amino acids. The protein is D-amino acid dehydrogenase of Methylobacterium sp. (strain 4-46).